We begin with the raw amino-acid sequence, 92 residues long: MARSLEKGPFVAYHLLKKIENLNVEEEKKIIVTWSRASTIVPIMVGHTIAVHNGQEHLPIYVTDRMVGHKLGEFAPTRIFRGHAKNDKKSRR.

Belongs to the universal ribosomal protein uS19 family.

It localises to the plastid. Its subcellular location is the chloroplast. Protein S19 forms a complex with S13 that binds strongly to the 16S ribosomal RNA. The sequence is that of Small ribosomal subunit protein uS19c from Huperzia lucidula (Shining clubmoss).